An 816-amino-acid polypeptide reads, in one-letter code: MFSRKKPEPAKRRQHDLSQFGLTEIPDDFDPSAGYGEDDGGDSDLEAELAAITGGEGAKPKPKPKAKLLPASDLDKMIADSLRDVSDDDDDDNLESDPDLLGELSGIGGLEEAEEEEPVAQPPAASEEPVQTFLPTTTVDTLSIIKQRLEMYKQAEANAKTAGDSGKARRFGRGLKTLKDLHRQAAAGKSINVDDIPPEVSVKPIGGQAPPVPAEESPAPSTPASPPPVPSRAAPDPPTPGTPVEPTTSVAPTSPPNPLVTQMRSRQTDYKAAALQSKRSGDISTALQFLKVVKQFDVVIKMCEDGQEVDLSDMPPPPAEFLEFLKKMQEEAAAEAVAEPTAAPEPTPVAPAPVLAAATNMLEALQQRLEKYQSVEAAAKAENNSGKARRFGRIVKQYEDAIKLYKAGKPVPYDELPVPPGFGPLPTADAAPVAPTPSLPTSPTSPPPTASTSAGGTPSSSSATTPTAPRKAPSPPKPKELTTRTSGNQQKNNIAEQQMKLLLERQKEFKLAAIEAKKAGEIDQAKEYLKIFKGFDSLLNAASSGLPVDLSTLPVPPSQRDNLEASFAIVSAEECDPTDDICEIGVRMEEQLAKQLMMCKNTRDHHKAMGDVAGMNRFENLALTVQKDLDLVRYSKRKNEPLPKFHYEKRSFNIVHCNTDLTDSELEIVVVRGISYNVANPKDVDTYVRVEFPLLNDESFKTKTNVIRDTSSPDYDERFKVDIQRTNRQFQRIFKRHGVKFEIYSRGGFLRSDTLIGTVNVKLQPLETKCEIHDTYDLMDGRKQVGGKLEVKIRVRNPILTKQMEHITEKWLVLDA.

Basic and acidic residues predominate over residues 1 to 11; sequence MFSRKKPEPAK. Disordered stretches follow at residues 1 to 135, 157 to 176, and 186 to 269; these read MFSR…TFLP, ANAKTAGDSGKARRFGRGLK, and AAGK…RQTD. Residues 25 to 47 show a composition bias toward acidic residues; that stretch reads IPDDFDPSAGYGEDDGGDSDLEA. A compositionally biased stretch (basic and acidic residues) spans 73–85; it reads DLDKMIADSLRDV. Over residues 86-100 the composition is skewed to acidic residues; it reads SDDDDDDNLESDPDL. Residues 122-131 show a composition bias toward low complexity; sequence PPAASEEPVQ. Residues 145 to 200 form a DM14 1 region; that stretch reads IKQRLEMYKQAEANAKTAGDSGKARRFGRGLKTLKDLHRQAAAGKSINVDDIPPEV. Residues 220–243 are compositionally biased toward pro residues; sequence PSTPASPPPVPSRAAPDPPTPGTP. DM14 regions lie at residues 265 to 317 and 365 to 419; these read SRQT…MPPP and LQQR…LPVP. Residues 355-382 adopt a coiled-coil conformation; it reads LAAATNMLEALQQRLEKYQSVEAAAKAE. The tract at residues 418–492 is disordered; sequence VPPGFGPLPT…TRTSGNQQKN (75 aa). Residues 424–433 show a composition bias toward low complexity; the sequence is PLPTADAAPV. The segment covering 434–449 has biased composition (pro residues); sequence APTPSLPTSPTSPPPT. Low complexity predominate over residues 450 to 471; the sequence is ASTSAGGTPSSSSATTPTAPRK. The span at 483 to 492 shows a compositional bias: polar residues; that stretch reads TRTSGNQQKN. The segment at 502–556 is DM14 4; the sequence is LLERQKEFKLAAIEAKKAGEIDQAKEYLKIFKGFDSLLNAASSGLPVDLSTLPVP. In terms of domain architecture, C2 spans 637–776; that stretch reads RKNEPLPKFH…ETKCEIHDTY (140 aa).

Belongs to the CC2D1 family. As to quaternary structure, interacts (via DM14 domains 1 and 3) with shrb; the interaction is direct and blocks access to the surface involved in shrb polymerization. This interaction may be required for the ESCRT-III complex role in multivesicular body formation.

It is found in the cytoplasm. It localises to the cytosol. Its subcellular location is the apicolateral cell membrane. The protein localises to the cell cortex. The protein resides in the endosome. Its function is as follows. Phosphatidyl inositol monophosphate binding protein involved in endosomal protein sorting through regulation of the endosomal sorting required for transport (ESCRT) pathway. Required for full activity of the ESCRT-III complex core component shrb/shrub, probably by preventing its inappropriate polymerisation. Required, but not essential, for the efficient generation of intraluminal vesicles (ILVs) in multivesicular bodies (MVBs). Involved in a late stage of the endosomal pathway targeting transmembrane proteins of the plasma membrane for lysosomal degradation. Plays a critical role in regulation of multiple signal transduction pathways, including the Notch and BMP/decapentaplegic (dpp) signaling pathways, through targeting of membrane bound receptors to multivesicular bodies, isolating them from the cytoplasm and targeting them for lysosomal degradation. Involved in targeting N/Notch for endosomal degradation, negatively regulating the Notch signaling pathway. Regulates Notch signaling in imaginal disk cells and follicle cells during oogenesis and multiple developmental processes, including development of wings, veins, legs, eyes and bristles. Restricts the activity of Notch to the dorsoventral (D/V) boundary of the wing imaginal disk. In external sensory organ development regulates Notch signaling during asymmetric cell division and differentiation of sensory organ precursor cells. May be involved in regulation of apoptosis and cell growth independent of Notch signaling. Involved in targeting tkv for endosomal degradation, negatively regulating the BMP/decapentaplegic (dpp) signaling pathway. Regulates the BMP/dpp signaling pathway in follicle cells during oogenesis, but not in imaginal disk cells during wing development. May be involved in differentiation or morphogenesis of peripodial epithelial cells in the developing imaginal disk. Involved in abscission of germline cells during oogenesis. The protein is Coiled-coil and C2 domain-containing protein 1-like of Drosophila melanogaster (Fruit fly).